The primary structure comprises 314 residues: 2,3,4,5-tetrahydropyridine-2,6-dicarboxylate N-succinyltransferase (314 aa).

2 residues coordinate Mg(2+): Asp163 and Glu180. Glu196 (acyl-anhydride intermediate) is an active-site residue. Succinyl-CoA-binding positions include Arg198, Gly213, Ser216, Ala239, 254–255, Gly262, Lys274, and 287–290; these read EA and RRNS.

It belongs to the type 2 tetrahydrodipicolinate N-succinyltransferase family. As to quaternary structure, homotrimer.

Its subcellular location is the cytoplasm. The enzyme catalyses (S)-2,3,4,5-tetrahydrodipicolinate + succinyl-CoA + H2O = (S)-2-succinylamino-6-oxoheptanedioate + CoA. Its pathway is amino-acid biosynthesis; L-lysine biosynthesis via DAP pathway; LL-2,6-diaminopimelate from (S)-tetrahydrodipicolinate (succinylase route): step 1/3. In terms of biological role, catalyzes the conversion of the cyclic tetrahydrodipicolinate (THDP) into the acyclic N-succinyl-L-2-amino-6-oxopimelate using succinyl-CoA. The polypeptide is 2,3,4,5-tetrahydropyridine-2,6-dicarboxylate N-succinyltransferase (Mycolicibacterium smegmatis (strain ATCC 700084 / mc(2)155) (Mycobacterium smegmatis)).